A 92-amino-acid chain; its full sequence is Acylphosphatase (92 aa).

Residues 4-92 form the Acylphosphatase-like domain; that stretch reads AVQLDVFGRV…SACHKFSVVG (89 aa). Residues arginine 19 and asparagine 37 contribute to the active site.

The protein belongs to the acylphosphatase family.

The enzyme catalyses an acyl phosphate + H2O = a carboxylate + phosphate + H(+). This Latilactobacillus sakei subsp. sakei (strain 23K) (Lactobacillus sakei subsp. sakei) protein is Acylphosphatase (acyP).